The following is a 477-amino-acid chain: Aspartyl/glutamyl-tRNA(Asn/Gln) amidotransferase subunit B (477 aa).

This sequence belongs to the GatB/GatE family. GatB subfamily. Heterotrimer of A, B and C subunits.

It carries out the reaction L-glutamyl-tRNA(Gln) + L-glutamine + ATP + H2O = L-glutaminyl-tRNA(Gln) + L-glutamate + ADP + phosphate + H(+). The catalysed reaction is L-aspartyl-tRNA(Asn) + L-glutamine + ATP + H2O = L-asparaginyl-tRNA(Asn) + L-glutamate + ADP + phosphate + 2 H(+). Its function is as follows. Allows the formation of correctly charged Asn-tRNA(Asn) or Gln-tRNA(Gln) through the transamidation of misacylated Asp-tRNA(Asn) or Glu-tRNA(Gln) in organisms which lack either or both of asparaginyl-tRNA or glutaminyl-tRNA synthetases. The reaction takes place in the presence of glutamine and ATP through an activated phospho-Asp-tRNA(Asn) or phospho-Glu-tRNA(Gln). The protein is Aspartyl/glutamyl-tRNA(Asn/Gln) amidotransferase subunit B of Lactococcus lactis subsp. cremoris (strain MG1363).